The chain runs to 483 residues: Shaker-related potassium channel tsha2 (483 aa).

Residues 1–165 are Cytoplasmic-facing; that stretch reads MTVVSCEIQD…YPESSGPARM (165 aa). The chain crosses the membrane as a helical span at residues 166–186; it reads IAVVSVSVIVISIVIFCLETL. At 187 to 220 the chain is on the extracellular side; it reads PQFREDTSANLPLSNHHTTNGTTLHKKPNLFTDP. Residues 221-241 form a helical membrane-spanning segment; that stretch reads FFMVETLCIVWFSFEFLVRFL. Residues 242-252 are Cytoplasmic-facing; the sequence is SCPSKPAFFKN. The S-palmitoyl cysteine moiety is linked to residue C243. Residues 253–273 form a helical membrane-spanning segment; sequence AMNSIDILAIAPYFITLGLEL. Residues 274-324 lie on the Extracellular side of the membrane; the sequence is AEQQEAGSEQAMSLAILRVIRLVRVFRIFKLSRHSKGLQILGQTLHASISE. A helical; Voltage-sensor transmembrane segment spans residues 325–345; it reads LGLLIFFLLIGVILFSSAVYF. Residues 346–353 lie on the Cytoplasmic side of the membrane; sequence AEADDPES. A helical transmembrane segment spans residues 354 to 374; the sequence is GFSSIPAAFWWAVVSMTTVGY. Residues 371–376 carry the Selectivity filter motif; the sequence is TVGYGD. Over 375–385 the chain is Extracellular; the sequence is GDMCPVTIGGK. A helical membrane pass occupies residues 386–406; the sequence is IVGSMCAIAGVLTIALPVPVI. Over 407 to 483 the chain is Cytoplasmic; the sequence is VSNFNYFYHR…EHYTGKLTDV (77 aa). Phosphotyrosine is present on Y426. Phosphothreonine is present on T430. The span at 440–452 shows a compositional bias: polar residues; it reads EFKSTSDSRQSLT. Residues 440–459 are disordered; sequence EFKSTSDSRQSLTKSEDTEE. Residues 481-483 carry the PDZ-binding motif; it reads TDV.

Belongs to the potassium channel family. A (Shaker) (TC 1.A.1.2) subfamily. In terms of assembly, heterotetramer of potassium channel proteins. Binds PDZ domains of dlg1, dlg2 and dlg4. As to expression, expressed in oligodendrocytes and astrocytes.

The protein resides in the membrane. Functionally, mediates the voltage-dependent potassium ion permeability of excitable membranes. Assuming opened or closed conformations in response to the voltage difference across the membrane, the protein forms a potassium-selective channel through which potassium ions may pass in accordance with their electrochemical gradient. This is Shaker-related potassium channel tsha2 from Oncorhynchus mykiss (Rainbow trout).